The sequence spans 314 residues: 4-hydroxy-3-methylbut-2-enyl diphosphate reductase (314 aa).

Cys-12 is a binding site for [4Fe-4S] cluster. 2 residues coordinate (2E)-4-hydroxy-3-methylbut-2-enyl diphosphate: His-41 and His-74. 2 residues coordinate dimethylallyl diphosphate: His-41 and His-74. Positions 41 and 74 each coordinate isopentenyl diphosphate. Residue Cys-96 coordinates [4Fe-4S] cluster. His-124 lines the (2E)-4-hydroxy-3-methylbut-2-enyl diphosphate pocket. His-124 lines the dimethylallyl diphosphate pocket. Position 124 (His-124) interacts with isopentenyl diphosphate. The Proton donor role is filled by Glu-126. Residue Thr-167 participates in (2E)-4-hydroxy-3-methylbut-2-enyl diphosphate binding. A [4Fe-4S] cluster-binding site is contributed by Cys-197. Residues Ser-225, Ser-226, Asn-227, and Ser-269 each coordinate (2E)-4-hydroxy-3-methylbut-2-enyl diphosphate. Ser-225, Ser-226, Asn-227, and Ser-269 together coordinate dimethylallyl diphosphate. Isopentenyl diphosphate is bound by residues Ser-225, Ser-226, Asn-227, and Ser-269.

This sequence belongs to the IspH family. [4Fe-4S] cluster serves as cofactor.

The catalysed reaction is isopentenyl diphosphate + 2 oxidized [2Fe-2S]-[ferredoxin] + H2O = (2E)-4-hydroxy-3-methylbut-2-enyl diphosphate + 2 reduced [2Fe-2S]-[ferredoxin] + 2 H(+). The enzyme catalyses dimethylallyl diphosphate + 2 oxidized [2Fe-2S]-[ferredoxin] + H2O = (2E)-4-hydroxy-3-methylbut-2-enyl diphosphate + 2 reduced [2Fe-2S]-[ferredoxin] + 2 H(+). The protein operates within isoprenoid biosynthesis; dimethylallyl diphosphate biosynthesis; dimethylallyl diphosphate from (2E)-4-hydroxy-3-methylbutenyl diphosphate: step 1/1. Its pathway is isoprenoid biosynthesis; isopentenyl diphosphate biosynthesis via DXP pathway; isopentenyl diphosphate from 1-deoxy-D-xylulose 5-phosphate: step 6/6. Catalyzes the conversion of 1-hydroxy-2-methyl-2-(E)-butenyl 4-diphosphate (HMBPP) into a mixture of isopentenyl diphosphate (IPP) and dimethylallyl diphosphate (DMAPP). Acts in the terminal step of the DOXP/MEP pathway for isoprenoid precursor biosynthesis. The polypeptide is 4-hydroxy-3-methylbut-2-enyl diphosphate reductase (Aliivibrio salmonicida (strain LFI1238) (Vibrio salmonicida (strain LFI1238))).